Consider the following 230-residue polypeptide: Uracil-DNA glycosylase (230 aa).

Residue aspartate 70 is the Proton acceptor of the active site.

This sequence belongs to the uracil-DNA glycosylase (UDG) superfamily. UNG family.

The protein localises to the cytoplasm. The catalysed reaction is Hydrolyzes single-stranded DNA or mismatched double-stranded DNA and polynucleotides, releasing free uracil.. Its function is as follows. Excises uracil residues from the DNA which can arise as a result of misincorporation of dUMP residues by DNA polymerase or due to deamination of cytosine. This is Uracil-DNA glycosylase from Pseudomonas putida (strain W619).